The sequence spans 105 residues: Defensin-like protein 106 (105 aa).

Residues 1–24 (MANTPKTLIAFVFSVIVIISYVHC) form the signal peptide. 4 cysteine pairs are disulfide-bonded: C57/C94, C63/C87, C73/C92, and C77/C93.

It belongs to the DEFL family.

The protein localises to the secreted. This is Defensin-like protein 106 from Arabidopsis thaliana (Mouse-ear cress).